The chain runs to 398 residues: 8-amino-7-oxononanoate synthase (398 aa).

Arg-26 contacts substrate. 113–114 is a binding site for pyridoxal 5'-phosphate; it reads GF. Residue His-138 participates in substrate binding. The pyridoxal 5'-phosphate site is built by Ser-181, His-209, and Thr-238. Lys-241 is subject to N6-(pyridoxal phosphate)lysine. Substrate is bound at residue Thr-355.

The protein belongs to the class-II pyridoxal-phosphate-dependent aminotransferase family. BioF subfamily. As to quaternary structure, homodimer. Pyridoxal 5'-phosphate serves as cofactor.

It catalyses the reaction 6-carboxyhexanoyl-[ACP] + L-alanine + H(+) = (8S)-8-amino-7-oxononanoate + holo-[ACP] + CO2. The protein operates within cofactor biosynthesis; biotin biosynthesis. Its function is as follows. Catalyzes the decarboxylative condensation of pimeloyl-[acyl-carrier protein] and L-alanine to produce 8-amino-7-oxononanoate (AON), [acyl-carrier protein], and carbon dioxide. This chain is 8-amino-7-oxononanoate synthase, found in Aeromonas salmonicida (strain A449).